Consider the following 260-residue polypeptide: 5'-nucleotidase SurE (260 aa).

The a divalent metal cation site is built by aspartate 8, aspartate 9, serine 39, and asparagine 91.

This sequence belongs to the SurE nucleotidase family. The cofactor is a divalent metal cation.

The protein resides in the cytoplasm. The catalysed reaction is a ribonucleoside 5'-phosphate + H2O = a ribonucleoside + phosphate. In terms of biological role, nucleotidase that shows phosphatase activity on nucleoside 5'-monophosphates. This is 5'-nucleotidase SurE from Acidovorax ebreus (strain TPSY) (Diaphorobacter sp. (strain TPSY)).